A 312-amino-acid chain; its full sequence is tRNA-cytidine(32) 2-sulfurtransferase (312 aa).

A PP-loop motif motif is present at residues 47–52 (SGGKDS). [4Fe-4S] cluster is bound by residues Cys-122, Cys-125, and Cys-213.

This sequence belongs to the TtcA family. In terms of assembly, homodimer. It depends on Mg(2+) as a cofactor. The cofactor is [4Fe-4S] cluster.

Its subcellular location is the cytoplasm. It catalyses the reaction cytidine(32) in tRNA + S-sulfanyl-L-cysteinyl-[cysteine desulfurase] + AH2 + ATP = 2-thiocytidine(32) in tRNA + L-cysteinyl-[cysteine desulfurase] + A + AMP + diphosphate + H(+). Its pathway is tRNA modification. Its function is as follows. Catalyzes the ATP-dependent 2-thiolation of cytidine in position 32 of tRNA, to form 2-thiocytidine (s(2)C32). The sulfur atoms are provided by the cysteine/cysteine desulfurase (IscS) system. The sequence is that of tRNA-cytidine(32) 2-sulfurtransferase from Actinobacillus succinogenes (strain ATCC 55618 / DSM 22257 / CCUG 43843 / 130Z).